A 232-amino-acid polypeptide reads, in one-letter code: Large ribosomal subunit protein uL1 (232 aa).

The protein belongs to the universal ribosomal protein uL1 family. Part of the 50S ribosomal subunit.

Binds directly to 23S rRNA. The L1 stalk is quite mobile in the ribosome, and is involved in E site tRNA release. In terms of biological role, protein L1 is also a translational repressor protein, it controls the translation of the L11 operon by binding to its mRNA. The chain is Large ribosomal subunit protein uL1 from Roseobacter denitrificans (strain ATCC 33942 / OCh 114) (Erythrobacter sp. (strain OCh 114)).